The chain runs to 387 residues: MSEHVRSAGPPQASTAPSGGSAVHEVTSVGARVALVMAGGTGGHIFPGLAVAEALRERGWRVHWLGGRGNAGHPSMESQLVPPRGFAFESIDFSGVRGKGPLTLVFLPLRLLKAFWQSIQVVRRVKPDVVVGLGGYIAFPAGMMSVLLGKPLVLHEQNSVAGMVNKVLAGVADRVFTAFPGVFRKAEWIGNPLRPAFIRQPDPATRFAGRAGPLKLLVVGGSLGAKALNELVPRALALMPPAQRPDVTHQSGIRQIDELRANYAAAGVQAELTPFIEDTAQAFADADLIICRAGASTVTEIAAVGAAALFVPFPSAVDDHQTTNARFLVDQGGGWLLQQRDMSAAALADMLQKTDRSALLQCALKAKTMQKTDATTRVVAACEELAR.

The tract at residues 1–22 (MSEHVRSAGPPQASTAPSGGSA) is disordered. UDP-N-acetyl-alpha-D-glucosamine-binding positions include 41–43 (TGG), Asn158, Arg194, Ser222, Ile276, and Gln321.

It belongs to the glycosyltransferase 28 family. MurG subfamily.

Its subcellular location is the cell inner membrane. It catalyses the reaction di-trans,octa-cis-undecaprenyl diphospho-N-acetyl-alpha-D-muramoyl-L-alanyl-D-glutamyl-meso-2,6-diaminopimeloyl-D-alanyl-D-alanine + UDP-N-acetyl-alpha-D-glucosamine = di-trans,octa-cis-undecaprenyl diphospho-[N-acetyl-alpha-D-glucosaminyl-(1-&gt;4)]-N-acetyl-alpha-D-muramoyl-L-alanyl-D-glutamyl-meso-2,6-diaminopimeloyl-D-alanyl-D-alanine + UDP + H(+). It participates in cell wall biogenesis; peptidoglycan biosynthesis. Cell wall formation. Catalyzes the transfer of a GlcNAc subunit on undecaprenyl-pyrophosphoryl-MurNAc-pentapeptide (lipid intermediate I) to form undecaprenyl-pyrophosphoryl-MurNAc-(pentapeptide)GlcNAc (lipid intermediate II). The polypeptide is UDP-N-acetylglucosamine--N-acetylmuramyl-(pentapeptide) pyrophosphoryl-undecaprenol N-acetylglucosamine transferase (Polaromonas sp. (strain JS666 / ATCC BAA-500)).